The following is a 354-amino-acid chain: Bacteriochlorophyll a protein (354 aa).

H99, H134, H278, H285, and H286 together coordinate bacteriochlorophyll a.

Homotrimer. Each subunit contains 7 molecules of bacteriochlorophyll a.

In terms of biological role, intermediary in the transfer of excitation energy from the chlorophyll to the reaction centers. This chain is Bacteriochlorophyll a protein (fmoA), found in Chlorobaculum thiosulfatiphilum (Chlorobium limicola f.sp. thiosulfatophilum).